Consider the following 163-residue polypeptide: MTENNPLKKISLLNPIHLLAVGFGSGLIHPAPGTWGSLAGTILGVILLSLLGVKIFLIFTALCFLLGCYLCQKTTADMGVHDHGSIVWDEFVGVFIVLAAIPSLSWQWILAAFALFRFFDILKPFPIRYFDEKLENGFGIMIDDVLAAIYAVIVVFAIQYWML.

A run of 4 helical transmembrane segments spans residues 10 to 28 (ISLL…SGLI), 35 to 51 (WGSL…LSLL), 92 to 116 (VGVF…FALF), and 137 to 157 (GFGI…VVFA).

The cofactor is Mg(2+).

The protein localises to the cell inner membrane. It catalyses the reaction a 1,2-diacyl-sn-glycero-3-phospho-(1'-sn-glycero-3'-phosphate) + H2O = a 1,2-diacyl-sn-glycero-3-phospho-(1'-sn-glycerol) + phosphate. It participates in phospholipid metabolism; phosphatidylglycerol biosynthesis; phosphatidylglycerol from CDP-diacylglycerol: step 2/2. In terms of biological role, lipid phosphatase which dephosphorylates phosphatidylglycerophosphate (PGP) to phosphatidylglycerol (PG). This is Phosphatidylglycerophosphatase A (pgpA) from Haemophilus influenzae (strain ATCC 51907 / DSM 11121 / KW20 / Rd).